Consider the following 132-residue polypeptide: Small ribosomal subunit protein uS8 (132 aa).

The protein belongs to the universal ribosomal protein uS8 family. In terms of assembly, part of the 30S ribosomal subunit. Contacts proteins S5 and S12.

Functionally, one of the primary rRNA binding proteins, it binds directly to 16S rRNA central domain where it helps coordinate assembly of the platform of the 30S subunit. The polypeptide is Small ribosomal subunit protein uS8 (Corynebacterium diphtheriae (strain ATCC 700971 / NCTC 13129 / Biotype gravis)).